The following is a 594-amino-acid chain: Adenine deaminase 1 (594 aa).

The protein belongs to the metallo-dependent hydrolases superfamily. Adenine deaminase family. It depends on Mn(2+) as a cofactor.

The catalysed reaction is adenine + H2O + H(+) = hypoxanthine + NH4(+). This Latilactobacillus sakei subsp. sakei (strain 23K) (Lactobacillus sakei subsp. sakei) protein is Adenine deaminase 1.